The following is a 510-amino-acid chain: NAD(P)H-quinone oxidoreductase subunit 2 A, chloroplastic (510 aa).

13 helical membrane passes run 24 to 44 (LLLF…GLIL), 57 to 77 (IPWL…ALLF), 99 to 119 (IFQF…VEYI), 124 to 144 (MAIT…MFLC), 149 to 169 (LITI…LSGY), 183 to 203 (YLLM…WLYG), 227 to 247 (PGIS…LSPA), 295 to 315 (WHLL…LIAI), 323 to 343 (MLAY…IVGD), 354 to 374 (YMLF…SFGL), 395 to 415 (ALSL…AGFF), 418 to 438 (LHLF…IGLL), and 484 to 504 (MIVC…IIAI).

This sequence belongs to the complex I subunit 2 family. In terms of assembly, NDH is composed of at least 16 different subunits, 5 of which are encoded in the nucleus.

It localises to the plastid. The protein localises to the chloroplast thylakoid membrane. The catalysed reaction is a plastoquinone + NADH + (n+1) H(+)(in) = a plastoquinol + NAD(+) + n H(+)(out). It carries out the reaction a plastoquinone + NADPH + (n+1) H(+)(in) = a plastoquinol + NADP(+) + n H(+)(out). Functionally, NDH shuttles electrons from NAD(P)H:plastoquinone, via FMN and iron-sulfur (Fe-S) centers, to quinones in the photosynthetic chain and possibly in a chloroplast respiratory chain. The immediate electron acceptor for the enzyme in this species is believed to be plastoquinone. Couples the redox reaction to proton translocation, and thus conserves the redox energy in a proton gradient. In Vitis vinifera (Grape), this protein is NAD(P)H-quinone oxidoreductase subunit 2 A, chloroplastic.